Consider the following 429-residue polypeptide: Methylenetetrahydrofolate--tRNA-(uracil-5-)-methyltransferase TrmFO (429 aa).

7–12 serves as a coordination point for FAD; it reads GAGLAG.

Belongs to the MnmG family. TrmFO subfamily. FAD is required as a cofactor.

It localises to the cytoplasm. It carries out the reaction uridine(54) in tRNA + (6R)-5,10-methylene-5,6,7,8-tetrahydrofolate + NADH + H(+) = 5-methyluridine(54) in tRNA + (6S)-5,6,7,8-tetrahydrofolate + NAD(+). It catalyses the reaction uridine(54) in tRNA + (6R)-5,10-methylene-5,6,7,8-tetrahydrofolate + NADPH + H(+) = 5-methyluridine(54) in tRNA + (6S)-5,6,7,8-tetrahydrofolate + NADP(+). Functionally, catalyzes the folate-dependent formation of 5-methyl-uridine at position 54 (M-5-U54) in all tRNAs. The chain is Methylenetetrahydrofolate--tRNA-(uracil-5-)-methyltransferase TrmFO from Thermosipho melanesiensis (strain DSM 12029 / CIP 104789 / BI429).